An 815-amino-acid chain; its full sequence is Sodium/hydrogen exchanger 1 (815 aa).

Over 1-98 the chain is Extracellular; the sequence is MVLRSGICGL…FPVLGIDYTH (98 aa). An O-linked (GalNAc...) threonine glycan is attached at Thr-42. The segment at 42–79 is disordered; that stretch reads TASTIRSSEPPRERSIGDVTTAPPEVTPESRPVNHSVT. Ser-56 carries an O-linked (GalNAc...) serine glycan. 3 O-linked (GalNAc...) threonine glycosylation sites follow: Thr-61, Thr-62, and Thr-68. N-linked (GlcNAc...) asparagine glycosylation is present at Asn-75. Residues 99–121 traverse the membrane as a helical segment; sequence VRTPFEISLWILLACLMKIGFHV. The Cytoplasmic portion of the chain corresponds to 122 to 130; sequence IPTISSIVP. Residues 131–148 traverse the membrane as a helical segment; that stretch reads ESCLLIVVGLLVGGLIKG. The Extracellular segment spans residues 149 to 158; it reads VGETPPFLQS. Residues 159–176 traverse the membrane as a helical segment; that stretch reads DVFFLFLLPPIILDAGYF. At 177–186 the chain is on the cytoplasmic side; the sequence is LPLRQFTENL. The helical transmembrane segment at 187–215 threads the bilayer; it reads GTILIFAVVGTLWNAFFLGGLMYAVCLVG. Residues 216 to 222 lie on the Extracellular side of the membrane; that stretch reads GEQINNI. A helical transmembrane segment spans residues 223–249; it reads GLLDNLLFGSIISAVDPVAVLAVFEEI. At 250 to 252 the chain is on the cytoplasmic side; that stretch reads HIN. A helical transmembrane segment spans residues 253 to 283; sequence ELLHILVFGESLLNDAVTVVLYHLFEEFANY. Residues 284 to 287 are Extracellular-facing; the sequence is EHVG. The chain crosses the membrane as a helical span at residues 288-322; it reads IVDIFLGFLSFFVVALGGVLVGVVYGVIAAFTSRF. Residues 323-328 lie on the Cytoplasmic side of the membrane; it reads TSHIRV. The chain crosses the membrane as a helical span at residues 329-341; the sequence is IEPLFVFLYSYMA. At 342–350 the chain is on the extracellular side; the sequence is YLSAELFHL. The helical transmembrane segment at 351–371 threads the bilayer; that stretch reads SGIMALIASGVVMRPYVEANI. At 372 to 373 the chain is on the cytoplasmic side; the sequence is SH. Residues 374-404 form a helical membrane-spanning segment; that stretch reads KSHTTIKYFLKMWSSVSETLIFIFLGVSTVA. At 405–410 the chain is on the extracellular side; that stretch reads GSHHWN. Residues 411–438 form a helical membrane-spanning segment; that stretch reads WTFVISTLLFCLIARVLGVLGLTWFINK. Topologically, residues 439–444 are cytoplasmic; it reads FRIVKL. The helical transmembrane segment at 445 to 469 threads the bilayer; it reads TPKDQFIIAYGGLRGAIAFSLGYLL. Over 470–475 the chain is Extracellular; it reads DKKHFP. The helical transmembrane segment at 476–505 threads the bilayer; that stretch reads MCDLFLTAIITVIFFTVFVQGMTIRPLVDL. An interaction with TESC region spans residues 503 to 545; the sequence is VDLLAVKKKQETKRSINEEIHTQFLDHLLTGIEDICGHYGHHH. Residues 506 to 815 lie on the Cytoplasmic side of the membrane; sequence LAVKKKQETK…EGEPFFPKGQ (310 aa). The PI(4,5)P2-binding region stretch occupies residues 509 to 516; it reads KKKQETKR. The interval 515 to 545 is interaction with CHP2; that stretch reads KRSINEEIHTQFLDHLLTGIEDICGHYGHHH. Residues 540 to 545 form a confers pH-dependent PI(4,5)P2 binding region; sequence HYGHHH. Positions 552–560 are PI(4,5)P2-binding region; that stretch reads RFNKKYVKK. Phosphoserine is present on residues Ser-599 and Ser-602. Thr-603 bears the Phosphothreonine mark. Residues Ser-605 and Ser-648 each carry the phosphoserine modification. Positions 633-815 are interaction with TESC; the sequence is KILRNNLQKT…EGEPFFPKGQ (183 aa). The interval 633–815 is interaction with CALM1; the sequence is KILRNNLQKT…EGEPFFPKGQ (183 aa). Residues 684–687 are interaction with PPP3CA; it reads LTVP. Residues Ser-693, Ser-697, and Ser-703 each carry the phosphoserine modification. An interaction with PPP3CA region spans residues 715–720; that stretch reads PVITID. A phosphoserine mark is found at Ser-723, Ser-726, and Ser-729. Residues 744–815 are disordered; sequence LSRDPAKVAE…EGEPFFPKGQ (72 aa). Position 779 is a phosphothreonine (Thr-779). The span at 782–791 shows a compositional bias: polar residues; that stretch reads PSDSPSSQRI. Ser-785, Ser-787, and Ser-796 each carry phosphoserine.

The protein belongs to the monovalent cation:proton antiporter 1 (CPA1) transporter (TC 2.A.36) family. As to quaternary structure, homodimer; dimerization is crucial for its function. Oligomer. Interacts with CALM1 in a calcium-dependent manner. Interacts with TESC. Interacts (via the C-terminal domain) with CHP1; the interaction occurs at the plasma membrane in a calcium-dependent manner and facilitates the maturation, cell surface expression, and function of SLC9A3. Interacts with CHP2; the interaction occurs in a calcium-dependent manner. Interacts with EZR; regulates the cytoskeletal interactions of SLC9A1 and promotes stress fiber formation. In terms of processing, O-glycosylated. Ubiquitinated, leading to its degradation by the proteasome. Ubiquitination is reduced by CHP1. Post-translationally, phosphorylation at Thr-779 increases SLC9A1 activity. Specifically dephosphorylated at Thr-779 by PPP3CA that negatively regulates SLC9A1 activity. Phosphorylation at Ser-648 by AKT1 reduces SLC9A1 binding to CALM1. In terms of processing, palmitoylated; may play a major role in SLC9A1 regulation. As to expression, kidney and intestine.

Its subcellular location is the cell membrane. The protein resides in the basolateral cell membrane. The catalysed reaction is Na(+)(in) + H(+)(out) = Na(+)(out) + H(+)(in). It carries out the reaction Li(+)(out) + H(+)(in) = Li(+)(in) + H(+)(out). It catalyses the reaction Li(+)(in) + Na(+)(out) = Li(+)(out) + Na(+)(in). With respect to regulation, activated at acidic pHs. Inhibited by amiloride and 5-amino-substituted derivatives. Inhibited by cariporide and eniporide. Phosphatidylinositol 4,5-bisphosphate (PI(4,5)P2) and phosphatidylinositol 3,4,5-trisphosphate (PI(3,4,5)P3) bind and differentially regulate SLC9A1 activity. Its function is as follows. Electroneutral Na(+) /H(+) antiporter that extrudes Na(+) in exchange for external protons driven by the inward sodium ion chemical gradient, protecting cells from acidification that occurs from metabolism. Exchanges intracellular H(+) ions for extracellular Na(+) in 1:1 stoichiometry. Plays a key role in maintening intracellular pH neutral and cell volume, and thus is important for cell growth, proliferation, migration and survival. In addition, can transport lithium Li(+) and also functions as a Na(+)/Li(+) antiporter. SLC9A1 also functions in membrane anchoring and organization of scaffolding complexes that coordinate signaling inputs. The polypeptide is Sodium/hydrogen exchanger 1 (Homo sapiens (Human)).